The chain runs to 83 residues: Large ribosomal subunit protein eL31 (83 aa).

It belongs to the eukaryotic ribosomal protein eL31 family.

The sequence is that of Large ribosomal subunit protein eL31 from Methanococcus vannielii (strain ATCC 35089 / DSM 1224 / JCM 13029 / OCM 148 / SB).